The chain runs to 381 residues: Choline transport ATP-binding protein OpuBA (381 aa).

Residues 2 to 236 (LTLENVSKTY…PADEFVEEFI (235 aa)) enclose the ABC transporter domain. 35 to 42 (GPSGCGKT) contributes to the ATP binding site. 2 CBS domains span residues 256-314 (MNTQ…LVSE) and 316-374 (LHED…WGEE).

It belongs to the ABC transporter superfamily.

Involved in a high affinity multicomponent binding-protein-dependent transport system for choline. Probably responsible for energy coupling to the transport system. The protein is Choline transport ATP-binding protein OpuBA (opuBA) of Bacillus subtilis (strain 168).